The following is a 114-amino-acid chain: MRFFNNKHRAKGLKAEEEACGFLKTLGFEMVERNFFSQFGEIDIIALKKGVLHFIEVKSGENFDPIYAITPSKLKKMIKTIRCYFSQKDPNSDFCIDALIVKNGKFELLENITF.

Belongs to the UPF0102 family.

This Helicobacter pylori (strain G27) protein is UPF0102 protein HPG27_782.